The sequence spans 515 residues: Cytochrome P450 2D7 (515 aa).

The Extracellular segment spans residues 1 to 2 (MG). Residues 3–23 (LEALVPLAMIVAIFLLLVDLM) traverse the membrane as a helical segment. Residues 24 to 301 (HRHQRWAARY…DENLRIVVGN (278 aa)) lie on the Cytoplasmic side of the membrane. Residues 302 to 322 (LFLAGMVTTSTTLAWGLLLMI) traverse the membrane as a helical segment. At 323–515 (LHLDVQRGRR…SPYELCAVPR (193 aa)) the chain is on the extracellular side. Asn-416 is a glycosylation site (N-linked (GlcNAc...) asparagine). Cys-461 provides a ligand contact to heme.

Belongs to the cytochrome P450 family. It depends on heme as a cofactor. Expressed in brain cortex (at protein level).

It localises to the membrane. The protein localises to the cytoplasm. Its subcellular location is the mitochondrion. It carries out the reaction an organic molecule + reduced [NADPH--hemoprotein reductase] + O2 = an alcohol + oxidized [NADPH--hemoprotein reductase] + H2O + H(+). In terms of biological role, may be responsible for the metabolism of many drugs and environmental chemicals that it oxidizes. It may be involved in the metabolism of codeine to morphine. However, another study could not confirm it. The polypeptide is Cytochrome P450 2D7 (Homo sapiens (Human)).